The sequence spans 507 residues: MSCRSYRISSGCGVTRNFSSCSAVAPKTGNRCCISAAPYRGVSCYRGLTGFGSRSLCNLGSCGPRIAVGGFRAGSCGRSFGYRSGGVCGPSPPCITTVSVNESLLTPLNLEIDPNAQCVKQEEKEQIKSLNSRFAAFIDKVRFLEQQNKLLETKWQFYQNQRCCESNLEPLFSGYIETLRREAECVEADSGRLASELNHVQEVLEGYKKKYEEEVALRATAENEFVVLKKDVDCAYLRKSDLEANVEALVEESSFLRRLYEEEIRVLQAHISDTSVIVKMDNSRDLNMDCIIAEIKAQYDDVASRSRAEAESWYRSKCEEMKATVIRHGETLRRTKEEINELNRMIQRLTAEIENAKCQRAKLEAAVAEAEQQGEAALSDARCKLAELEGALQKAKQDMACLLKEYQEVMNSKLGLDIEIATYRRLLEGEEHRLCEGVGSVNVCVSSSRGGVSCGGLSYSTTPGRQITSGPSAIGGSITVVAPDSCAPCQPRSSSFSCGSSRSVRFA.

Residues methionine 1–glutamate 123 form a head region. Positions glutamate 123–leucine 434 constitute an IF rod domain. Residues lysine 124–tyrosine 158 form a coil 1A region. A linker 1 region spans residues glutamine 159 to leucine 168. Positions glutamate 169–alanine 269 are coil 1B. Lysine 229 participates in a covalent cross-link: Glycyl lysine isopeptide (Lys-Gly) (interchain with G-Cter in SUMO1). Positions histidine 270–leucine 286 are linker 12. The coil 2 stretch occupies residues asparagine 287 to glutamate 430. A tail region spans residues glutamate 431 to alanine 507.

Belongs to the intermediate filament family. As to quaternary structure, heterotetramer of two type I and two type II keratins. As to expression, synthesis occurs immediately above a small population of matrix cells at the base of the hair bulb and the trichocytes lining the dermal papilla and extends upward through the matrix and ends in the lower part of the cortex of the hair shaft.

This chain is Keratin, type II cuticular Hb5 (KRT85), found in Homo sapiens (Human).